Reading from the N-terminus, the 309-residue chain is Clotting factor G beta subunit (309 aa).

Positions 1-31 (MDISFLVFITLSMALFSSNVTGTSVTSRVRR) are cleaved as a signal peptide. Disulfide bonds link Cys-38-Cys-158, Cys-74-Cys-90, Cys-205-Cys-227, and Cys-238-Cys-268. One can recognise a Peptidase S1 domain in the interval 47-292 (IIGGGIATPH…YVNWLQEITF (246 aa)). Residue His-89 is the Charge relay system of the active site. Asn-100 carries an N-linked (GlcNAc...) asparagine glycan. Asp-138 acts as the Charge relay system in catalysis. Residue Asn-206 is glycosylated (N-linked (GlcNAc...) asparagine). Ser-242 (charge relay system) is an active-site residue.

Belongs to the peptidase S1 family. Clotting factor G is a heterodimer composed of two non-covalently associated subunits, alpha and beta. Upon activation, converted to a two-chain active form linked by a disulfide bond. Forms a covalent heterodimer with intracellular coagulation inhibitor 3/LICI-3. Expressed in the hemocytes (at protein level).

It catalyses the reaction Selective cleavage of 98-Arg-|-Ile-99 bond in Limulus proclotting enzyme to form active clotting enzyme.. Binding to (1-&gt;3)-beta-D-glucan to alpha subunit, induces autocatalysis and activation of beta subunit. Inhibited by intracellular coagulation inhibitor 3/LICI-3 and to a lesser extend by intracellular coagulation inhibitor 2/LICI-2. Component of the heterodimer clotting factor G which may play a role in defense mechanisms against fungi. Initiates a (1-&gt;3)-beta-glucan-sensing clotting pathway whereby the alpha subunit binds to glucans containing (1-&gt;3)-beta linkages, which are components of the fungal cell wall, and the beta subunit catalyzes the activation of proclotting enzyme. This Tachypleus tridentatus (Japanese horseshoe crab) protein is Clotting factor G beta subunit.